The sequence spans 339 residues: Ribosomal RNA small subunit methyltransferase H (339 aa).

Residues Gly44–Tyr46, Asp61, Phe88, Asp105, and Gln112 each bind S-adenosyl-L-methionine. Positions Pro263–Ala312 are disordered. Basic residues predominate over residues Arg301–Ala312.

It belongs to the methyltransferase superfamily. RsmH family.

Its subcellular location is the cytoplasm. The enzyme catalyses cytidine(1402) in 16S rRNA + S-adenosyl-L-methionine = N(4)-methylcytidine(1402) in 16S rRNA + S-adenosyl-L-homocysteine + H(+). Functionally, specifically methylates the N4 position of cytidine in position 1402 (C1402) of 16S rRNA. The polypeptide is Ribosomal RNA small subunit methyltransferase H (Chelativorans sp. (strain BNC1)).